The following is a 100-amino-acid chain: Large ribosomal subunit protein uL23 (100 aa).

Belongs to the universal ribosomal protein uL23 family. As to quaternary structure, part of the 50S ribosomal subunit. Contacts protein L29, and trigger factor when it is bound to the ribosome.

One of the early assembly proteins it binds 23S rRNA. One of the proteins that surrounds the polypeptide exit tunnel on the outside of the ribosome. Forms the main docking site for trigger factor binding to the ribosome. This Shewanella pealeana (strain ATCC 700345 / ANG-SQ1) protein is Large ribosomal subunit protein uL23.